The chain runs to 225 residues: Protein GrpE (225 aa).

Over residues 1 to 15 (MSGDASTPEQDQNVV) the composition is skewed to polar residues. Disordered stretches follow at residues 1 to 48 (MSGD…DRMQ) and 198 to 225 (VSMG…AEEA). Residues 201-225 (GPGPSDPGSAPAEAAAAPDQTAEEA) show a composition bias toward low complexity.

It belongs to the GrpE family. Homodimer.

The protein resides in the cytoplasm. Its function is as follows. Participates actively in the response to hyperosmotic and heat shock by preventing the aggregation of stress-denatured proteins, in association with DnaK and GrpE. It is the nucleotide exchange factor for DnaK and may function as a thermosensor. Unfolded proteins bind initially to DnaJ; upon interaction with the DnaJ-bound protein, DnaK hydrolyzes its bound ATP, resulting in the formation of a stable complex. GrpE releases ADP from DnaK; ATP binding to DnaK triggers the release of the substrate protein, thus completing the reaction cycle. Several rounds of ATP-dependent interactions between DnaJ, DnaK and GrpE are required for fully efficient folding. This is Protein GrpE from Synechococcus sp. (strain CC9605).